A 278-amino-acid polypeptide reads, in one-letter code: Energy-coupling factor transporter ATP-binding protein EcfA1 (278 aa).

The 235-residue stretch at 5–239 (IRVQHLNYTY…GMELLRLGLD (235 aa)) folds into the ABC transporter domain. ATP is bound at residue 39-46 (GHNGSGKS). Residue glutamate 165 is the Proton acceptor of the active site.

This sequence belongs to the ABC transporter superfamily. Energy-coupling factor EcfA family. Forms a stable energy-coupling factor (ECF) transporter complex probably composed of 2 membrane-embedded substrate-binding proteins (S component), 2 ATP-binding proteins (A component) and 2 transmembrane proteins (T component). This complex interacts with a number of substrate-specific components, including FolT and ThiT for 5-formyltetrahydrofolate and thiamine respectively.

The protein resides in the cell membrane. Functionally, ATP-binding (A) component of a common energy-coupling factor (ECF) ABC-transporter complex. Unlike classic ABC transporters this ECF transporter provides the energy necessary to transport a number of different substrates including 5-formyltetrahydrofolate and thiamine. Expression of the complex plus FolT or ThiT in Lactococcus lactis subsp. cremoris (strain NZ9000) allows 5-formyltetrahydrofolate or thiamine uptake respectively; 5-formyltetrahydrofolate or thiamine are not taken up in the absence of FolT/ThiT or the EcfA1A2T complex. Deenergized L.lactis subsp. cremoris (treated with 2-deoxyglucose) does not take up substrate. This chain is Energy-coupling factor transporter ATP-binding protein EcfA1, found in Lacticaseibacillus paracasei (strain ATCC 334 / BCRC 17002 / CCUG 31169 / CIP 107868 / KCTC 3260 / NRRL B-441) (Lactobacillus paracasei).